The chain runs to 196 residues: Oocyte zinc finger protein XlCOF26 (196 aa).

7 C2H2-type zinc fingers span residues 6–28 (YSCTDCGRSFYAKGHLLNHQKNH), 34–56 (FTCTECGKIFTRKSNLRKHQRIH), 62–84 (FTCTECGKRFTEKRNLLIHQRIH), 90–112 (FTCTECGKSFNLWSTLRNHHKIH), 118–140 (FTCPECGKKFSVKNSLRKHQRTH), 146–168 (FTCTECGKTFTKKSTFHMHQSTH), and 174–196 (FTCTECGKSFAKNGNLRIHQMTH).

The protein belongs to the krueppel C2H2-type zinc-finger protein family.

The protein resides in the nucleus. In terms of biological role, may be involved in transcriptional regulation. The polypeptide is Oocyte zinc finger protein XlCOF26 (Xenopus laevis (African clawed frog)).